Consider the following 590-residue polypeptide: Selenoprotein N (590 aa).

Residues 1–26 form a disordered region; it reads MGRARPGQRGPPSPGPAAQPPAPPRR. The N-terminal stretch at 1–43 is a signal peptide; that stretch reads MGRARPGQRGPPSPGPAAQPPAPPRRRARSLALLGALLAAAAA. Over residues 9-23 the composition is skewed to pro residues; sequence RGPPSPGPAAQPPAP. The region spanning 67-102 is the EF-hand domain; that stretch reads TLGTDGLFLFSSLDTDGDMYISPEEFKPIAEKLTGS. N-linked (GlcNAc...) asparagine glycosylation occurs at N126. A non-standard amino acid (selenocysteine) is located at residue U127. N190 carries an N-linked (GlcNAc...) asparagine glycan. Residue U462 is a non-standard amino acid, selenocysteine. Residues N483, N505, and N531 are each glycosylated (N-linked (GlcNAc...) asparagine).

Interacts with RYR1, RYR2 and RYR3. In terms of processing, N-glycosylated. Isoform 1 and isoform 2 are expressed in skeletal muscle, brain, lung and placenta. Isoform 2 is also expressed in heart, diaphragm and stomach.

It localises to the endoplasmic reticulum membrane. Functionally, plays an important role in cell protection against oxidative stress and in the regulation of redox-related calcium homeostasis. Regulates the calcium level of the ER by protecting the calcium pump ATP2A2 against the oxidoreductase ERO1A-mediated oxidative damage. Within the ER, ERO1A activity increases the concentration of H(2)O(2), which attacks the luminal thiols in ATP2A2 and thus leads to cysteinyl sulfenic acid formation (-SOH) and SEPN1 reduces the SOH back to free thiol (-SH), thus restoring ATP2A2 activity. Acts as a modulator of ryanodine receptor (RyR) activity: protects RyR from oxidation due to increased oxidative stress, or directly controls the RyR redox state, regulating the RyR-mediated calcium mobilization required for normal muscle development and differentiation. In terms of biological role, essential for muscle regeneration and satellite cell maintenance in skeletal muscle. The polypeptide is Selenoprotein N (Homo sapiens (Human)).